Here is a 387-residue protein sequence, read N- to C-terminus: NADPH-dependent aldehyde reductase YqhD (387 aa).

Gly-38, Ser-40, Asn-68, Gly-95, Ser-96, Asp-99, Thr-138, Asn-147, Gly-149, Lys-160, Tyr-179, and Thr-182 together coordinate NADP(+). Positions 194, 198, 267, and 281 each coordinate Zn(2+).

Belongs to the iron-containing alcohol dehydrogenase family. In terms of assembly, homodimer. The crystals contain two dimers in the asymmetric unit. Zn(2+) serves as cofactor.

It carries out the reaction a primary alcohol + NADP(+) = an aldehyde + NADPH + H(+). The enzyme catalyses butan-1-ol + NADP(+) = butanal + NADPH + H(+). It catalyses the reaction 1-propanol + NADP(+) = propanal + NADPH + H(+). The catalysed reaction is allyl alcohol + NADP(+) = acrolein + NADPH + H(+). Its function is as follows. Exhibits NADPH-dependent reductase activity for a broad range of short-chain aldehydes. Shows highest catalytic efficiency toward butanal, propanal and the highly toxic aldehydes acrolein and malondialdehyde (MDA), which are produced mainly during lipid peroxidation. Mediates resistance to reactive oxygen species (ROS) elicitors, such as paraquat and potassium tellurite, probably by protecting the cell against the toxic effects of reactive aldehydes derived from membrane lipid peroxidation. Also acts, with lower efficiency, on acetaldehyde, glyceraldehyde, glycolaldehyde, methylglyoxal, glyoxal and hydroxyacetone. Could be involved in glyoxal metabolism, by catalyzing the reduction of glyoxal to glycolaldehyde, and further to 1,2-ethandiol. Catalyzes the reduction of isobutyraldehyde (2-methylpropanal) to isobutanol, and probably contributes to the production of isobutanol. Can probably catalyze the reduction of glutaraldehyde, a widely used biocide, to 1,5-pentanediol, which is non-toxic. Overexpression of YqhD protects the cells against glutaraldehyde toxicity. Can catalyze in vitro the NADPH-dependent reduction of furfural, a natural product of lignocellulosic decomposition, to the less toxic product, furfuryl alcohol. However, it is unlikely that furfural is a physiological substrate. Functionally, in contrast, Sulzenbacher et al. detected significant activities only in the presence of alcohol and NADP(+). They reported in vitro NADP(+)-dependent alcohol dehydrogenase (ADH) activity towards various alcohols, with a preference for alcohols longer than C(3), but the affinity for the substrates is poor, suggesting that these compounds are not the physiological substrates. Perez et al. did not detect dehydrogenase activity with short and medium chain alcohols such as methanol, ethanol, propanol, butanol or isopropanol. This Escherichia coli (strain K12) protein is NADPH-dependent aldehyde reductase YqhD (yqhD).